The following is an 802-amino-acid chain: MSLQYHVLNSIPSTTFLSSTKTTISSSFLTISGSPLNVARDKSRSGSIHCSKLRTQEYINSQEVQHDLPLIHEWQQLQGEDAPQISVGSNSNAFKEAVKSVKTILRNLTDGEITISAYDTAWVALIDAGDKTPAFPSAVKWIAENQLSDGSWGDAYLFSYHDRLINTLACVVALRSWNLFPHQCNKGITFFRENIGKLEDENDEHMPIGFEVAFPSLLEIARGINIDVPYDSPVLKDIYAKKELKLTRIPKEIMHKIPTTLLHSLEGMRDLDWEKLLKLQSQDGSFLFSPSSTAFAFMQTRDSNCLEYLRNAVKRFNGGVPNVFPVDLFEHIWIVDRLQRLGISRYFEEEIKECLDYVHRYWTDNGICWARCSHVQDIDDTAMAFRLLRQHGYQVSADVFKNFEKEGEFFCFVGQSNQAVTGMFNLYRASQLAFPREEILKNAKEFSYNYLLEKREREELIDKWIIMKDLPGEIGFALEIPWYASLPRVETRFYIDQYGGENDVWIGKTLYRMPYVNNNGYLELAKQDYNNCQAQHQLEWDIFQKWYEENRLSEWGVRRSELLECYYLAAATIFESERSHERMVWAKSSVLVKAISSSFGESSDSRRSFSDQFHEYIANARRSDHHFNDRNMRLDRPGSVQASRLAGVLIGTLNQMSFDLFMSHGRDVNNLLYLSWGDWMEKWKLYGDEGEGELMVKMIILMKNNDLTNFFTHTHFVRLAEIINRICLPRQYLKARRNDEKEKTIKSMEKEMGKMVELALSESDTFRDVSITFLDVAKAFYYFALCGDHLQTHISKVLFQKV.

The transit peptide at 1–60 (MSLQYHVLNSIPSTTFLSSTKTTISSSFLTISGSPLNVARDKSRSGSIHCSKLRTQEYIN) directs the protein to the chloroplast. Residue K245 coordinates substrate. 2 residues coordinate Mg(2+): D377 and D379. The short motif at 377 to 380 (DIDD) is the DXDD motif element. Position 463 (K463) interacts with substrate.

It belongs to the terpene synthase family. Tpsc subfamily. Mg(2+) serves as cofactor. The N-terminus is blocked. As to expression, expressed in roots, leaves, flowers and also in siliques.

It is found in the plastid. The protein localises to the chloroplast. The enzyme catalyses (2E,6E,10E)-geranylgeranyl diphosphate = ent-copalyl diphosphate. The protein operates within plant hormone biosynthesis; gibberellin biosynthesis. Its activity is regulated as follows. Inhibited by high concentrations of magnesium. Functionally, catalyzes the conversion of geranylgeranyl diphosphate to the gibberellin precursor ent-copalyl diphosphate. The chain is Ent-copalyl diphosphate synthase, chloroplastic (GA1) from Arabidopsis thaliana (Mouse-ear cress).